The primary structure comprises 416 residues: MGLNEQQNVPSQRKIIVFIVLAFIPIALFRLCFNNPFSSIKDTSLQDSAANVVITSFSSSSQEEESQESFDHIQDEPLCDYTQGNWVRDEIGPLYNGSTCGTIKDGQNCFRHGRPDSGYLYWKWKPNECDIPRFDSNRFLDLMRDKHLAFIGDSMARNQLESLLCLLSTVSSPDLVYRNGEDNKFRRWRFESHNVTVSVYWSPFLVAGLEKSGNLDHNVLHIDRVDERWGNDLERFDTVVVSVGHWFLHPAVYYESGSVLGCHSCETSNCTEVGFYDVFRKAIRTTLRAVAGSGREVILTTFSPSHFEGRPWDSLGACNMTKPYEGKVLEGLDLDMRKIEIEEYTAAAAEVRLEVLDVTAMSVLRPDGHPGPYMYADPFKNGVPERIPNDCLHWCLPGPVDTWNEIMIEMLRRWKV.

At 1–14 (MGLNEQQNVPSQRK) the chain is on the cytoplasmic side. The helical; Signal-anchor for type II membrane protein transmembrane segment at 15–35 (IIVFIVLAFIPIALFRLCFNN) threads the bilayer. Residues 36–416 (PFSSIKDTSL…MIEMLRRWKV (381 aa)) are Lumenal-facing. Cystine bridges form between cysteine 79–cysteine 129, cysteine 100–cysteine 165, cysteine 109–cysteine 395, and cysteine 318–cysteine 391. The N-linked (GlcNAc...) asparagine glycan is linked to asparagine 96. Residues 152–154 (GDS) carry the GDS motif motif. Serine 154 serves as the catalytic Nucleophile. Residues asparagine 194, asparagine 269, and asparagine 319 are each glycosylated (N-linked (GlcNAc...) asparagine). Aspartate 390 acts as the Proton donor in catalysis. A DXXH motif motif is present at residues 390–393 (DCLH). The active-site Proton acceptor is histidine 393.

The protein belongs to the PC-esterase family. TBL subfamily.

It localises to the golgi apparatus membrane. Its function is as follows. Xyloglucan acetyltransferase that catalyzes the acetylation of fucosylated Gal residues on xyloglucan side chains. Predominantly catalyze 6-O-monoacetylation of Gal residues in the Fuc-Gal-Xyl trisaccharide side chains of xyloglucan oligomers. Involved in xyloglucan specific O-acetylation in roots and rosette leaves. In Arabidopsis thaliana (Mouse-ear cress), this protein is Xyloglucan O-acetyltransferase 1.